The chain runs to 475 residues: LEC14B homolog (475 aa).

The disordered stretch occupies residues Met1–Asn34. A compositionally biased stretch (polar residues) spans Ser23 to Ser33. WD repeat units lie at residues Asp211–Asp240, Ala252–Asp283, Gly299–Asp329, Gly375–Asp411, and His423–Glu453.

The protein belongs to the WD repeat LEC14B family.

This is LEC14B homolog from Prunus armeniaca (Apricot).